The following is a 265-amino-acid chain: GTP cyclohydrolase FolE2 (265 aa).

Belongs to the GTP cyclohydrolase IV family.

The enzyme catalyses GTP + H2O = 7,8-dihydroneopterin 3'-triphosphate + formate + H(+). It functions in the pathway cofactor biosynthesis; 7,8-dihydroneopterin triphosphate biosynthesis; 7,8-dihydroneopterin triphosphate from GTP: step 1/1. Functionally, converts GTP to 7,8-dihydroneopterin triphosphate. This chain is GTP cyclohydrolase FolE2, found in Magnetococcus marinus (strain ATCC BAA-1437 / JCM 17883 / MC-1).